Consider the following 218-residue polypeptide: ATP-dependent Clp protease proteolytic subunit 2 (218 aa).

Belongs to the peptidase S14 family. In terms of assembly, fourteen ClpP subunits assemble into 2 heptameric rings which stack back to back to give a disk-like structure with a central cavity, resembling the structure of eukaryotic proteasomes.

The protein localises to the cytoplasm. The enzyme catalyses Hydrolysis of proteins to small peptides in the presence of ATP and magnesium. alpha-casein is the usual test substrate. In the absence of ATP, only oligopeptides shorter than five residues are hydrolyzed (such as succinyl-Leu-Tyr-|-NHMec, and Leu-Tyr-Leu-|-Tyr-Trp, in which cleavage of the -Tyr-|-Leu- and -Tyr-|-Trp bonds also occurs).. Its function is as follows. Cleaves peptides in various proteins in a process that requires ATP hydrolysis. Has a chymotrypsin-like activity. Plays a major role in the degradation of misfolded proteins. The protein is ATP-dependent Clp protease proteolytic subunit 2 of Gloeobacter violaceus (strain ATCC 29082 / PCC 7421).